The sequence spans 543 residues: Keratin, type II cytoskeletal 75 (543 aa).

A compositionally biased stretch (polar residues) spans 1–16 (MSRQSTITFQTSSRRG). The segment at 1–48 (MSRQSTITFQTSSRRGFSTASATTPATSRSRFSSASVTHSPAGSGGLG) is disordered. Positions 1–144 (MSRQSTITFQ…DPNIQRVRKE (144 aa)) are head. Residues 17–36 (FSTASATTPATSRSRFSSAS) show a composition bias toward low complexity. A coil 1A region spans residues 145–180 (EREQIKTLNNKFASFIDKVRFLEQQNKVLETKWSLL). Residues 145 to 458 (EREQIKTLNN…KLLEGEECRL (314 aa)) enclose the IF rod domain. The interval 181 to 199 (QEQGTRTVRQSLEPFFEAY) is linker 1. The coil 1B stretch occupies residues 200-292 (ITDLRRQLDS…LFEAELCQMQ (93 aa)). Residues 293 to 315 (TRVSDTSVVLSMDNNRSLDLDSI) form a linker 12 region. The segment at 316-454 (IAEVKAQYEE…ATYRKLLEGE (139 aa)) is coil 2. The interval 455 to 543 (ECRLSGEGVS…TSSSRKSYKH (89 aa)) is tail. The segment at 511–543 (SSFSNSSSRGLGGSGSSFKFVSTTSSSRKSYKH) is disordered. Residues 526 to 543 (SSFKFVSTTSSSRKSYKH) are compositionally biased toward low complexity.

Belongs to the intermediate filament family. In terms of assembly, heterodimer of a type I and a type II keratin. May associate with KRT17.

Its function is as follows. Plays a central role in hair and nail formation. Essential component of keratin intermediate filaments in the companion layer of the hair follicle. The sequence is that of Keratin, type II cytoskeletal 75 (KRT75) from Bos taurus (Bovine).